The following is a 151-amino-acid chain: MTTDTHTLNIEEILELLPHRFPFLLVDRVLDFEKGKFLRAVKNVSFNEPFFQGHFPGKPIFPGVLILEAMAQATGILAFKSVGKLEPGELYYFAAVDEARFKRPVQPGDQMILEVEFIKERRGVARFKGVAKVDGEVACEASMMCARRRES.

His54 is an active-site residue.

This sequence belongs to the thioester dehydratase family. FabZ subfamily.

The protein localises to the cytoplasm. It carries out the reaction a (3R)-hydroxyacyl-[ACP] = a (2E)-enoyl-[ACP] + H2O. Its function is as follows. Involved in unsaturated fatty acids biosynthesis. Catalyzes the dehydration of short chain beta-hydroxyacyl-ACPs and long chain saturated and unsaturated beta-hydroxyacyl-ACPs. The polypeptide is 3-hydroxyacyl-[acyl-carrier-protein] dehydratase FabZ (Pectobacterium atrosepticum (strain SCRI 1043 / ATCC BAA-672) (Erwinia carotovora subsp. atroseptica)).